The sequence spans 423 residues: Glutamate-1-semialdehyde 2,1-aminomutase (423 aa).

Lysine 266 is subject to N6-(pyridoxal phosphate)lysine.

The protein belongs to the class-III pyridoxal-phosphate-dependent aminotransferase family. HemL subfamily. In terms of assembly, homodimer. The cofactor is pyridoxal 5'-phosphate.

The protein localises to the cytoplasm. It carries out the reaction (S)-4-amino-5-oxopentanoate = 5-aminolevulinate. It functions in the pathway porphyrin-containing compound metabolism; protoporphyrin-IX biosynthesis; 5-aminolevulinate from L-glutamyl-tRNA(Glu): step 2/2. The polypeptide is Glutamate-1-semialdehyde 2,1-aminomutase (Nitratidesulfovibrio vulgaris (strain ATCC 29579 / DSM 644 / CCUG 34227 / NCIMB 8303 / VKM B-1760 / Hildenborough) (Desulfovibrio vulgaris)).